The primary structure comprises 210 residues: Inner membrane-spanning protein YciB (210 aa).

6 helical membrane passes run 12 to 32 (EVSP…FFFA), 53 to 73 (IFIA…VSWM), 78 to 98 (LPMM…LTLW), 115 to 135 (LFGA…GYVF), 153 to 173 (WGVF…SFST), and 175 to 195 (FWVA…TLAQ).

This sequence belongs to the YciB family.

Its subcellular location is the cell inner membrane. In terms of biological role, plays a role in cell envelope biogenesis, maintenance of cell envelope integrity and membrane homeostasis. The chain is Inner membrane-spanning protein YciB from Sinorhizobium medicae (strain WSM419) (Ensifer medicae).